The chain runs to 526 residues: Tyrosine-protein kinase transforming protein Src (526 aa).

The interval Met1–Gly52 is disordered. Residue Gly2 is the site of N-myristoyl glycine; by host attachment. The span at Lys7–His25 shows a compositional bias: basic and acidic residues. The 62-residue stretch at Gly81 to Ser142 folds into the SH3 domain. The SH2 domain occupies Trp148–Cys245. The Protein kinase domain occupies Leu267–Leu517. Residues Leu273–Val281 and Lys295 contribute to the ATP site. Asp386 acts as the Proton acceptor in catalysis. Tyr416 carries the phosphotyrosine; by autocatalysis modification.

It belongs to the protein kinase superfamily. Tyr protein kinase family. SRC subfamily. Requires Mn(2+) as cofactor. Post-translationally, the phosphorylated form is termed pp60v-src.

It carries out the reaction L-tyrosyl-[protein] + ATP = O-phospho-L-tyrosyl-[protein] + ADP + H(+). Its function is as follows. This phosphoprotein, required for both the initiation and the maintenance of neoplastic transformation, is a protein kinase that catalyzes the phosphorylation of tyrosine residues in vitro. This Gallus gallus (Chicken) protein is Tyrosine-protein kinase transforming protein Src (V-SRC).